Here is a 209-residue protein sequence, read N- to C-terminus: MTGTGDVNLKIKEIEMSHLEERFFNFVKKLGRFNKRSMFGGVGLFNEDAMFSLVTDGRLYVRGGGEVDARFEELGCERFKHVKKTTIATVNYFDVTELFEKKPASLLSIVQEAMENSRLEREFKKSKENRRLRDLPNMQLTLERMVKKAGVPDVDSFLEIGAVDVFKKVNHTYGGDVDVKLLWKFAGAESGVHWTLLQEPAKQALLQQV.

The protein belongs to the Sxy/TfoX family.

In terms of biological role, required for DNA transformation jointly with TfoY (tfoX2). The polypeptide is DNA transformation protein TfoX1 (Aliivibrio fischeri (strain ATCC 700601 / ES114) (Vibrio fischeri)).